The chain runs to 162 residues: Precorrin-2 dehydrogenase (162 aa).

NAD(+) contacts are provided by residues 20-21 (SI) and 41-42 (PD).

The protein belongs to the precorrin-2 dehydrogenase / sirohydrochlorin ferrochelatase family.

It carries out the reaction precorrin-2 + NAD(+) = sirohydrochlorin + NADH + 2 H(+). It functions in the pathway cofactor biosynthesis; adenosylcobalamin biosynthesis; sirohydrochlorin from precorrin-2: step 1/1. It participates in porphyrin-containing compound metabolism; siroheme biosynthesis; sirohydrochlorin from precorrin-2: step 1/1. In terms of biological role, catalyzes the dehydrogenation of precorrin-2 to form sirohydrochlorin which is used as a precursor in both siroheme biosynthesis and in the anaerobic branch of adenosylcobalamin biosynthesis. The protein is Precorrin-2 dehydrogenase (sirC) of Bacillus subtilis (strain 168).